We begin with the raw amino-acid sequence, 113 residues long: Large ribosomal subunit protein eL30 (113 aa).

This sequence belongs to the eukaryotic ribosomal protein eL30 family.

The chain is Large ribosomal subunit protein eL30 (RpL30) from Spodoptera frugiperda (Fall armyworm).